Here is a 186-residue protein sequence, read N- to C-terminus: MAVARAGVLGVQWLQRASRNVMPLGARTASHMTKDMFPGPYPRTPEERAAAAKKYNMRVEDYEPYPDDGMGYGDYPKLPDRSQHERDPWYSWDQPGLRLNWGEPMHWHLDMYNRNRVDTSPTPLSWHVMCMQLFGFLAFMIFMCWVGDVYPVYQPVGPKQYPYNNLYLERGGDPSKEPERVVHYEI.

Residues 1–28 constitute a mitochondrion transit peptide; it reads MAVARAGVLGVQWLQRASRNVMPLGART. A helical transmembrane segment spans residues 133–153; the sequence is LFGFLAFMIFMCWVGDVYPVY.

The protein belongs to the complex I NDUFB8 subunit family. Complex I is composed of 45 different subunits.

The protein resides in the mitochondrion inner membrane. Its function is as follows. Accessory subunit of the mitochondrial membrane respiratory chain NADH dehydrogenase (Complex I), that is believed not to be involved in catalysis. Complex I functions in the transfer of electrons from NADH to the respiratory chain. The immediate electron acceptor for the enzyme is believed to be ubiquinone. The chain is NADH dehydrogenase [ubiquinone] 1 beta subcomplex subunit 8, mitochondrial (NDUFB8) from Pan troglodytes (Chimpanzee).